The following is a 63-amino-acid chain: MSRRCAITGKGPMVGNNVSHANNKTKRRFLPNLRTIRVTLEDGTTRKIKVAASTLRTMKKQSN.

The segment at 1-20 is disordered; that stretch reads MSRRCAITGKGPMVGNNVSH.

Belongs to the bacterial ribosomal protein bL28 family.

This Campylobacter curvus (strain 525.92) protein is Large ribosomal subunit protein bL28.